The primary structure comprises 122 residues: Ig heavy chain V region M511 (122 aa).

In terms of domain architecture, Ig-like spans 1–114 (EVKLVESGGG…SYWYFDVWGA (114 aa)).

The polypeptide is Ig heavy chain V region M511 (Mus musculus (Mouse)).